We begin with the raw amino-acid sequence, 308 residues long: uncharacterized protein (308 aa).

Glutamate 59 is a catalytic residue.

The protein belongs to the PhzF family.

This is an uncharacterized protein from Deinococcus radiodurans (strain ATCC 13939 / DSM 20539 / JCM 16871 / CCUG 27074 / LMG 4051 / NBRC 15346 / NCIMB 9279 / VKM B-1422 / R1).